Reading from the N-terminus, the 322-residue chain is Chromoplast-specific carotenoid-associated protein, chromoplastic (322 aa).

The N-terminal 58 residues, 1 to 58 (MAFVSQFNQLPCKTLALNPPQPQLTSKPSVFPIASIGATARAAAGKSLISVRPAFKVR), are a transit peptide targeting the chromoplast. The disordered stretch occupies residues 67–88 (GEDKDEKYGDDSSVAVAEKEEE).

Belongs to the PAP/fibrillin family. As to expression, expressed in corollas. Not detected in fruits, stems, leaves, and roots.

It is found in the plastid. The protein localises to the chromoplast. Its function is as follows. May be involved in carotenoid sequestration within chromoplasts. The chain is Chromoplast-specific carotenoid-associated protein, chromoplastic (CHRC) from Cucumis sativus (Cucumber).